Consider the following 92-residue polypeptide: Acylphosphatase (92 aa).

A disulfide bond links Cys-5 and Cys-49. Positions 5–92 constitute an Acylphosphatase-like domain; it reads CIIAWIYGRV…SGELTDFRIR (88 aa). Residues Arg-20 and Asn-38 contribute to the active site.

The protein belongs to the acylphosphatase family.

The enzyme catalyses an acyl phosphate + H2O = a carboxylate + phosphate + H(+). The chain is Acylphosphatase from Escherichia coli O1:K1 / APEC.